Here is a 227-residue protein sequence, read N- to C-terminus: Cytochrome c oxidase subunit 2 (227 aa).

Over 1-14 the chain is Mitochondrial intermembrane; the sequence is MAHPMQLGFQDAAS. The chain crosses the membrane as a helical span at residues 15-45; the sequence is PIMEELLYFHDHTLMIVFMISSLVLYIISLM. Over 46 to 59 the chain is Mitochondrial matrix; it reads LSTELTHTSTMDAQ. The chain crosses the membrane as a helical span at residues 60-87; sequence EVETVWTILPAVILILIALPSLRILYMM. The Mitochondrial intermembrane segment spans residues 88–227; sequence DEINTPSMTL…YFEEWLLKSL (140 aa). Cu cation-binding residues include His161, Cys196, Glu198, Cys200, His204, and Met207. Position 198 (Glu198) interacts with Mg(2+). Phosphotyrosine is present on Tyr218.

It belongs to the cytochrome c oxidase subunit 2 family. Component of the cytochrome c oxidase (complex IV, CIV), a multisubunit enzyme composed of 14 subunits. The complex is composed of a catalytic core of 3 subunits MT-CO1, MT-CO2 and MT-CO3, encoded in the mitochondrial DNA, and 11 supernumerary subunits COX4I, COX5A, COX5B, COX6A, COX6B, COX6C, COX7A, COX7B, COX7C, COX8 and NDUFA4, which are encoded in the nuclear genome. The complex exists as a monomer or a dimer and forms supercomplexes (SCs) in the inner mitochondrial membrane with NADH-ubiquinone oxidoreductase (complex I, CI) and ubiquinol-cytochrome c oxidoreductase (cytochrome b-c1 complex, complex III, CIII), resulting in different assemblies (supercomplex SCI(1)III(2)IV(1) and megacomplex MCI(2)III(2)IV(2)). Found in a complex with TMEM177, COA6, COX18, COX20, SCO1 and SCO2. Interacts with TMEM177 in a COX20-dependent manner. Interacts with COX20. Interacts with COX16. Cu cation serves as cofactor.

It localises to the mitochondrion inner membrane. It carries out the reaction 4 Fe(II)-[cytochrome c] + O2 + 8 H(+)(in) = 4 Fe(III)-[cytochrome c] + 2 H2O + 4 H(+)(out). Its function is as follows. Component of the cytochrome c oxidase, the last enzyme in the mitochondrial electron transport chain which drives oxidative phosphorylation. The respiratory chain contains 3 multisubunit complexes succinate dehydrogenase (complex II, CII), ubiquinol-cytochrome c oxidoreductase (cytochrome b-c1 complex, complex III, CIII) and cytochrome c oxidase (complex IV, CIV), that cooperate to transfer electrons derived from NADH and succinate to molecular oxygen, creating an electrochemical gradient over the inner membrane that drives transmembrane transport and the ATP synthase. Cytochrome c oxidase is the component of the respiratory chain that catalyzes the reduction of oxygen to water. Electrons originating from reduced cytochrome c in the intermembrane space (IMS) are transferred via the dinuclear copper A center (CU(A)) of subunit 2 and heme A of subunit 1 to the active site in subunit 1, a binuclear center (BNC) formed by heme A3 and copper B (CU(B)). The BNC reduces molecular oxygen to 2 water molecules using 4 electrons from cytochrome c in the IMS and 4 protons from the mitochondrial matrix. In Nycticebus coucang (Slow loris), this protein is Cytochrome c oxidase subunit 2 (MT-CO2).